Here is a 218-residue protein sequence, read N- to C-terminus: LexA repressor (218 aa).

The H-T-H motif DNA-binding region spans 28–48; the sequence is RAEIAAEFGFSSPNSAEEHLR. Residues S136 and K173 each act as for autocatalytic cleavage activity in the active site.

Belongs to the peptidase S24 family. Homodimer.

The catalysed reaction is Hydrolysis of Ala-|-Gly bond in repressor LexA.. Functionally, represses a number of genes involved in the response to DNA damage (SOS response), including recA and lexA. In the presence of single-stranded DNA, RecA interacts with LexA causing an autocatalytic cleavage which disrupts the DNA-binding part of LexA, leading to derepression of the SOS regulon and eventually DNA repair. This Cupriavidus metallidurans (strain ATCC 43123 / DSM 2839 / NBRC 102507 / CH34) (Ralstonia metallidurans) protein is LexA repressor.